The chain runs to 89 residues: MANHKSAEKRNRQNQVARLRNKSTRTAMKNSVRKLDEALEAGVEADTAEALRGAISRIAKTASKGVIHKKTASRKISRLTKRVNALVAA.

Positions 1-11 (MANHKSAEKRN) are enriched in basic and acidic residues. The interval 1 to 30 (MANHKSAEKRNRQNQVARLRNKSTRTAMKN) is disordered.

It belongs to the bacterial ribosomal protein bS20 family.

In terms of biological role, binds directly to 16S ribosomal RNA. This Desulfotalea psychrophila (strain LSv54 / DSM 12343) protein is Small ribosomal subunit protein bS20.